Here is a 262-residue protein sequence, read N- to C-terminus: uncharacterized protein (262 aa).

The S4 RNA-binding domain occupies 6 to 70; that stretch reads LRINQFLAHY…LKNKKFSVLV (65 aa). Asp108 acts as the Nucleophile in catalysis.

This sequence belongs to the pseudouridine synthase RsuA family.

It carries out the reaction a uridine in RNA = a pseudouridine in RNA. This is an uncharacterized protein from Helicobacter pylori (strain J99 / ATCC 700824) (Campylobacter pylori J99).